The chain runs to 315 residues: L-threo-3-deoxy-hexylosonate aldolase (315 aa).

50–51 (SN) is a binding site for substrate. The active-site Schiff-base intermediate with substrate is K174.

Belongs to the DapA family.

The enzyme catalyses 2-dehydro-3-deoxy-L-galactonate = L-glyceraldehyde + pyruvate. It functions in the pathway carbohydrate acid metabolism. In terms of biological role, mediates the conversion of 2-dehydro-3-deoxy-L-galactonate to pyruvate and L-glyceraldehyde in D-galacturonate catabolic process. The sequence is that of L-threo-3-deoxy-hexylosonate aldolase (lga1) from Hypocrea jecorina (Trichoderma reesei).